Here is a 92-residue protein sequence, read N- to C-terminus: Small ribosomal subunit protein bS18 (92 aa).

Positions Met-1–Arg-22 are disordered.

Belongs to the bacterial ribosomal protein bS18 family. As to quaternary structure, part of the 30S ribosomal subunit. Forms a tight heterodimer with protein bS6.

Its function is as follows. Binds as a heterodimer with protein bS6 to the central domain of the 16S rRNA, where it helps stabilize the platform of the 30S subunit. This chain is Small ribosomal subunit protein bS18, found in Citrifermentans bemidjiense (strain ATCC BAA-1014 / DSM 16622 / JCM 12645 / Bem) (Geobacter bemidjiensis).